The sequence spans 459 residues: VGFKAGVKDYKLTYYTPDYETKDTDILAAFRVTPQPGVPPEEAGAAVAAESSTGTWTTVWTDGLTSLDRYKGRCYHIEPVAGEESQFIAYVAYPLDLFEEGSVTNMFTSIVGNVFGFKALRALRLEDLRIPTAYVKTFQGPPHGIQVERDKLNKYGRPLLGCTIKPKLGLSAKNYGRAVYECLRGGLDFTKDDENVNSQPFMRWRDRFLFCAEAIYKAQAETGEIKGHYLNATAGTCEDMMKRAVFARELGVPIVMHDYLTGGFTANTSLAHYCRDNGLLLHIHRAMHAVIDRQKNHGMHFRVLAKALRMSGGDHIHAGTVVGKLEGEREITLGFVDLLRDDFVEKDRSRGIYFTQDWVSMPGVLPVASGGIHVWHMPALTEIFGDDSVLQFGGGTLGHPWGNAPGAVANRVALEACVQARNEGRDLAREGNEIIREASKWSPELAAACEVWKEIKFEF.

At Lys4 the chain carries N6,N6,N6-trimethyllysine. Substrate is bound by residues Asn113 and Thr163. The Proton acceptor role is filled by Lys165. Lys167 contributes to the substrate binding site. The Mg(2+) site is built by Lys191, Asp193, and Glu194. Lys191 is subject to N6-carboxylysine. His284 (proton acceptor) is an active-site residue. 3 residues coordinate substrate: Arg285, His317, and Ser369.

It belongs to the RuBisCO large chain family. Type I subfamily. Heterohexadecamer of 8 large chains and 8 small chains; disulfide-linked. The disulfide link is formed within the large subunit homodimers. The cofactor is Mg(2+). In terms of processing, the disulfide bond which can form in the large chain dimeric partners within the hexadecamer appears to be associated with oxidative stress and protein turnover.

It localises to the plastid. The protein resides in the chloroplast. It catalyses the reaction 2 (2R)-3-phosphoglycerate + 2 H(+) = D-ribulose 1,5-bisphosphate + CO2 + H2O. The catalysed reaction is D-ribulose 1,5-bisphosphate + O2 = 2-phosphoglycolate + (2R)-3-phosphoglycerate + 2 H(+). In terms of biological role, ruBisCO catalyzes two reactions: the carboxylation of D-ribulose 1,5-bisphosphate, the primary event in carbon dioxide fixation, as well as the oxidative fragmentation of the pentose substrate in the photorespiration process. Both reactions occur simultaneously and in competition at the same active site. This chain is Ribulose bisphosphate carboxylase large chain, found in Morus alba (White mulberry).